Reading from the N-terminus, the 367-residue chain is Choline-phosphate cytidylyltransferase A (367 aa).

Met1 bears the N-acetylmethionine mark. Residues 1-32 (MDAQSSAKVNSRKRRKEAPGPNGATEEDGIPS) form a disordered region. The residue at position 8 (Lys8) is an N6-acetyllysine. CTP contacts are provided by Ile84, Phe85, His92, and Lys122. The phosphocholine site is built by Lys122 and Trp151. 7 residues coordinate CTP: His168, Asp169, Tyr173, Gln195, Arg196, Thr197, and Ile200. Amphipathic regions lie at residues 228–287 (KELN…EFIG) and 298–315 (ALKH…QAIS). Ser233 is modified (phosphoserine). Residues 272-293 (IDLIQKWEEKSREFIGSFLEMF) form an autoinhibitory (AI) region. Residues 313–367 (AISPKQSPSSSPTHERSPSPSFRWPFSGKTSPSSSPASLSRCRAVTCDISEDEED) form a disordered region. 5 positions are modified to phosphoserine: Ser315, Ser319, Ser321, Ser322, and Ser323. Residues 315-324 (SPKQSPSSSP) are compositionally biased toward polar residues. Copy 1 of the repeat occupies 319-324 (SPSSSP). The interval 319 to 348 (SPSSSPTHERSPSPSFRWPFSGKTSPSSSP) is 3 X repeats. Position 325 is a phosphothreonine (Thr325). Phosphoserine occurs at positions 329, 331, and 333. Residues 329-333 (SPSPS) form a 2; approximate repeat. Low complexity predominate over residues 330 to 352 (PSPSFRWPFSGKTSPSSSPASLS). Thr342 is subject to Phosphothreonine. Ser343, Ser345, Ser346, Ser347, Ser350, and Ser352 each carry phosphoserine. Residues 343–348 (SPSSSP) form repeat 3. Phosphothreonine is present on Thr358. Ser362 bears the Phosphoserine mark.

Belongs to the cytidylyltransferase family. Homodimer. Post-translationally, the serine residues of the C-terminus are phosphorylated. The inactive soluble form is stabilized by phosphorylation, the active membrane bound form is promoted by anionic lipids or diacylglycerol, and is stabilized by dephosphorylation. Monoubiquitinated by the SCF(FBXL2) complex, leading to proteasomal degradation. Brain and liver (at protein level). Also found in heart, kidney, spleen, lung, skeletal muscle, ovary and testis.

The protein localises to the cytoplasm. Its subcellular location is the cytosol. It localises to the membrane. The protein resides in the endoplasmic reticulum membrane. It is found in the nucleus. The enzyme catalyses phosphocholine + CTP + H(+) = CDP-choline + diphosphate. Its pathway is phospholipid metabolism; phosphatidylcholine biosynthesis; phosphatidylcholine from phosphocholine: step 1/2. With respect to regulation, interconverts between an inactive cytosolic form and an active membrane-bound form. Activation involves disruption of an inhibitory interaction between helices at the base of the active site and the autoinhibitory (AI) region. Functionally, catalyzes the key rate-limiting step in the CDP-choline pathway for phosphatidylcholine biosynthesis. The polypeptide is Choline-phosphate cytidylyltransferase A (Pcyt1a) (Mus musculus (Mouse)).